Here is a 143-residue protein sequence, read N- to C-terminus: Beta/delta-urticatoxin-Uf2b (143 aa).

The first 18 residues, 1 to 18, serve as a signal peptide directing secretion; that stretch reads MGAIVLVALMALVASSSA. Residues 19–80 constitute a propeptide that is removed on maturation; sequence FSDIEHNIMK…MMLSGRPQPN (62 aa). 6 disulfide bridges follow: C83-C100, C90-C105, C99-C113, C115-C129, C122-C134, and C128-C142.

This sequence belongs to the urticatoxin-2 family. In terms of tissue distribution, expressed in trichomes, that are stiff epidermal hairs located on the surface of petioles and leaves.

The protein resides in the secreted. Plant defense neurotoxin that causes pain and systemic symptoms in mammals via modulation of voltage-gated sodium channels (Nav). Potent modulator of human Nav1.5/SCN5A (EC(50)=55 nM), Nav1.6/SCN8A (EC(50)=0.86 nM), and Nav1.7/SCN9A (EC(50)=208 nM), where it shifts the activation threshold to more negative potentials and delays fast inactivation. Also shifts the voltage-dependence of steady-state fast inactivation of Nav1.6/SCN8A, but not that of Nav1.5/SCN5A or Nav1.7/SCN9A. On Nav1.7/SCN9A, principally acts by binding to extracellular loops of domain IV (Nav site 3). In vivo, intraplantar injection into mice causes numerous dose-dependent, immediate, and long-lasting spontaneous pain behaviors, while no swelling is observed in the injected paw. At the highest doses tested, systemic symptoms including hypokinesia and hypersalivation are observed. This Urtica ferox (Tree nettle) protein is Beta/delta-urticatoxin-Uf2b.